We begin with the raw amino-acid sequence, 464 residues long: MKKTRIRTRYAPSPTGYLHIGGARTALFNYLFAKHFNGDFIVRIEDTDIARNVAGGEESQLDNLEWLQIYPDESPKNPNEKYGKYRQSEKLDRYNEIVEILLKKGLAYKAYDTTYELEKQRAEQIAKGIFSFRYDRNWLKISDEEIKKREVEQTYSIRIALPKNHDYEWNDLVRGLIKVNSEDIGDWVIIKSDKYPTYNFAVVVDDFDMQISHVLRGEEHITNTPKQLAVYEAMGWDKPVFGHLTLITNSKGVKLSKRDDSVKQFISNYKEDGYVSWAISNYLALLGWTSKDTKEIMTKEELIEKFDPERLSASPSKFDMKKMNWYGKHYLQEINKNEIFEYLESLKDKKWLDLFIETFLPNAFSLSELKRELKEYENPMIEKPEIEINDVVKKFKQNLNFENFSVDSIQKAIDKTGTDLNVNGKKLFLPIRLATTFNEHGPELAKAIYLYGKEIIQKRLGNVN.

Residues 12–22 (PSPTGYLHIGG) carry the 'HIGH' region motif. The 'KMSKS' region motif lies at 254 to 258 (KLSKR). Lysine 257 provides a ligand contact to ATP.

The protein belongs to the class-I aminoacyl-tRNA synthetase family. Glutamate--tRNA ligase type 1 subfamily. Monomer.

The protein localises to the cytoplasm. It catalyses the reaction tRNA(Glu) + L-glutamate + ATP = L-glutamyl-tRNA(Glu) + AMP + diphosphate. Functionally, catalyzes the attachment of glutamate to tRNA(Glu) in a two-step reaction: glutamate is first activated by ATP to form Glu-AMP and then transferred to the acceptor end of tRNA(Glu). This Mycoplasma mobile (strain ATCC 43663 / 163K / NCTC 11711) (Mesomycoplasma mobile) protein is Glutamate--tRNA ligase.